A 919-amino-acid chain; its full sequence is 2-oxoadipate dehydrogenase complex component E1 (919 aa).

2 positions are modified to N6-succinyllysine: Lys-183 and Lys-188. The disordered stretch occupies residues 299 to 320 (GKTRGRQQSRQDGDYSPDNSAQ). 2 positions are modified to N6-succinyllysine: Lys-800 and Lys-818.

It belongs to the alpha-ketoglutarate dehydrogenase family. As to quaternary structure, the 2-oxoadipate dehydrogenase complex is composed of OADH (2-oxoadipate dehydrogenase; E1a), DLST (dihydrolipoamide succinyltransferase; E2) and DLD (dihydrolipoamide dehydrogenase; E3). E1a functional unit is a dimer. Interacts with DLST. Thiamine diphosphate is required as a cofactor.

It localises to the mitochondrion. The enzyme catalyses N(6)-[(R)-lipoyl]-L-lysyl-[protein] + 2-oxoadipate + H(+) = N(6)-[(R)-S(8)-glutaryldihydrolipoyl]-L-lysyl-[protein] + CO2. The protein operates within amino-acid degradation. 2-oxoadipate dehydrogenase (E1a) component of the 2-oxoadipate dehydrogenase complex (OADHC). Participates in the first step, rate limiting for the overall conversion of 2-oxoadipate (alpha-ketoadipate) to glutaryl-CoA and CO(2) catalyzed by the whole OADHC. Catalyzes the irreversible decarboxylation of 2-oxoadipate via the thiamine diphosphate (ThDP) cofactor and subsequent transfer of the decarboxylated acyl intermediate on an oxidized dihydrolipoyl group that is covalently amidated to the E2 enzyme (dihydrolipoyllysine-residue succinyltransferase or DLST). Can catalyze the decarboxylation of 2-oxoglutarate in vitro, but at a much lower rate than 2-oxoadipate. Responsible for the last step of L-lysine, L-hydroxylysine and L-tryptophan catabolism with the common product being 2-oxoadipate. The protein is 2-oxoadipate dehydrogenase complex component E1 (DHTKD1) of Homo sapiens (Human).